The sequence spans 459 residues: Argininosuccinate lyase (459 aa).

Belongs to the lyase 1 family. Argininosuccinate lyase subfamily.

The protein resides in the cytoplasm. It catalyses the reaction 2-(N(omega)-L-arginino)succinate = fumarate + L-arginine. It functions in the pathway amino-acid biosynthesis; L-arginine biosynthesis; L-arginine from L-ornithine and carbamoyl phosphate: step 3/3. In Lactococcus lactis subsp. cremoris (strain MG1363), this protein is Argininosuccinate lyase.